The sequence spans 351 residues: Foldase protein PrsA 1 (351 aa).

The N-terminal stretch at 1 to 22 is a signal peptide; that stretch reads MKNSNKLIASVVTLASVMALAA. Residue cysteine 23 is the site of N-palmitoyl cysteine attachment. Cysteine 23 carries the S-diacylglycerol cysteine lipid modification. In terms of domain architecture, PpiC spans 145 to 240; sequence TPTMAVEMIT…KKFYIVKVTK (96 aa). 2 stretches are compositionally biased toward low complexity: residues 303–317 and 326–351; these read KTKA…SESS and ESEQ…PAAQ. Positions 303 to 351 are disordered; sequence KTKAASESSTTSESSKAAEENPSESEQTQTSSAEEPTETEAQTQEPAAQ.

Belongs to the PrsA family.

It localises to the cell membrane. It catalyses the reaction [protein]-peptidylproline (omega=180) = [protein]-peptidylproline (omega=0). Its function is as follows. Plays a major role in protein secretion by helping the post-translocational extracellular folding of several secreted proteins. This is Foldase protein PrsA 1 (prsA1) from Streptococcus pyogenes serotype M1.